The primary structure comprises 478 residues: Aspartyl/glutamyl-tRNA(Asn/Gln) amidotransferase subunit B 1 (478 aa).

This sequence belongs to the GatB/GatE family. GatB subfamily. As to quaternary structure, heterotrimer of A, B and C subunits.

It catalyses the reaction L-glutamyl-tRNA(Gln) + L-glutamine + ATP + H2O = L-glutaminyl-tRNA(Gln) + L-glutamate + ADP + phosphate + H(+). The catalysed reaction is L-aspartyl-tRNA(Asn) + L-glutamine + ATP + H2O = L-asparaginyl-tRNA(Asn) + L-glutamate + ADP + phosphate + 2 H(+). Allows the formation of correctly charged Asn-tRNA(Asn) or Gln-tRNA(Gln) through the transamidation of misacylated Asp-tRNA(Asn) or Glu-tRNA(Gln) in organisms which lack either or both of asparaginyl-tRNA or glutaminyl-tRNA synthetases. The reaction takes place in the presence of glutamine and ATP through an activated phospho-Asp-tRNA(Asn) or phospho-Glu-tRNA(Gln). The chain is Aspartyl/glutamyl-tRNA(Asn/Gln) amidotransferase subunit B 1 from Syntrophus aciditrophicus (strain SB).